The sequence spans 208 residues: N-(5'-phosphoribosyl)anthranilate isomerase (208 aa).

Belongs to the TrpF family.

The enzyme catalyses N-(5-phospho-beta-D-ribosyl)anthranilate = 1-(2-carboxyphenylamino)-1-deoxy-D-ribulose 5-phosphate. Its pathway is amino-acid biosynthesis; L-tryptophan biosynthesis; L-tryptophan from chorismate: step 3/5. The protein is N-(5'-phosphoribosyl)anthranilate isomerase of Neisseria meningitidis serogroup B (strain ATCC BAA-335 / MC58).